The sequence spans 67 residues: Putative antitoxin PF1308 (67 aa).

Belongs to the UPF0165 family.

Functionally, possibly the antitoxin component of a type II toxin-antitoxin (TA) system. This chain is Putative antitoxin PF1308, found in Pyrococcus furiosus (strain ATCC 43587 / DSM 3638 / JCM 8422 / Vc1).